Here is a 914-residue protein sequence, read N- to C-terminus: NADH-quinone oxidoreductase subunit G (914 aa).

The 83-residue stretch at 1 to 83 folds into the 2Fe-2S ferredoxin-type domain; the sequence is MATIHVDGKE…GTFISIDDSE (83 aa). [2Fe-2S] cluster-binding residues include Cys34, Cys45, Cys48, and Cys67. The 40-residue stretch at 83–122 folds into the 4Fe-4S His(Cys)3-ligated-type domain; the sequence is EAKAFRESVVEWLMTNHPHDCPVCEEGGNCHLQDMTVMTG. [4Fe-4S] cluster is bound by residues His99, Cys103, Cys106, Cys112, Cys151, Cys154, Cys157, Cys201, Cys228, Cys231, Cys235, and Cys263. A 4Fe-4S Mo/W bis-MGD-type domain is found at 221-277; sequence MQFAPSICQQCSVGCNTSPGERYGELRRIENRYNGSVNHYFMCDRGRFGYGYVNLKD.

It belongs to the complex I 75 kDa subunit family. In terms of assembly, composed of 13 different subunits. Subunits NuoCD, E, F, and G constitute the peripheral sector of the complex. It depends on [2Fe-2S] cluster as a cofactor. [4Fe-4S] cluster is required as a cofactor.

The catalysed reaction is a quinone + NADH + 5 H(+)(in) = a quinol + NAD(+) + 4 H(+)(out). NDH-1 shuttles electrons from NADH, via FMN and iron-sulfur (Fe-S) centers, to quinones in the respiratory chain. The immediate electron acceptor for the enzyme in this species is believed to be ubiquinone. Couples the redox reaction to proton translocation (for every two electrons transferred, four hydrogen ions are translocated across the cytoplasmic membrane), and thus conserves the redox energy in a proton gradient. This Yersinia pestis protein is NADH-quinone oxidoreductase subunit G (nuoG).